Consider the following 90-residue polypeptide: Non-structural protein NS-S (90 aa).

The tract at residues 4-29 (KLSLPGKNLKMQKRRWKPTRMMLTRA) is nucleolar signal.

Belongs to the hantavirus NS-S protein family. As to quaternary structure, interacts with host MAVS; this interaction may reduce MAVS ubiquitination.

It localises to the host cytoplasm. It is found in the host perinuclear region. Its subcellular location is the host nucleus. Antagonizes host type-I IFN signaling pathway. In Homo sapiens (Human), this protein is Non-structural protein NS-S (N).